Consider the following 1362-residue polypeptide: Insulin receptor (1362 aa).

An N-terminal signal peptide occupies residues 1–37 (MGQGVLRGEGHPNNNPNSKVGWKSLVGIITIFMLILC). A leucine-rich region region spans residues 38-184 (DQSDGKICYS…DSVEDNYIEL (147 aa)). A disulfide bridge connects residues C45 and C63. N-linked (GlcNAc...) asparagine glycosylation is found at N53, N115, and N148. 14 disulfide bridges follow: C163–C192, C196–C219, C206–C225, C229–C238, C233–C244, C245–C253, C249–C262, C265–C274, C278–C290, C296–C321, C303–C311, C325–C338, C341–C345, and C349–C370. N332 carries an N-linked (GlcNAc...) asparagine glycan. N-linked (GlcNAc...) asparagine glycans are attached at residues N374, N434, and N455. A disulfide bridge connects residues C472 and C505. Fibronectin type-III domains follow at residues 508 to 629 (NLLT…TNET) and 633 to 730 (VPLD…IQKE). N-linked (GlcNAc...) asparagine glycans are attached at residues N551, N627, N642, N660, and N707. 2 disulfides stabilise this stretch: C683/C896 and C822/C830. The disordered stretch occupies residues 694 to 714 (WTPPTEIDENGNENQTEHTSV). The span at 705–714 (NENQTEHTSV) shows a compositional bias: polar residues. The interval 741–749 (ENYLHNEVF) is insulin-binding. Residues 759 to 951 (DLFGVANGTL…PDHPHSNIVK (193 aa)) lie on the Extracellular side of the membrane. N765 and N779 each carry an N-linked (GlcNAc...) asparagine glycan. The Fibronectin type-III 3 domain maps to 849 to 944 (VVGPITYEYV…EQAYFQVPDH (96 aa)). 2 N-linked (GlcNAc...) asparagine glycosylation sites follow: N917 and N930. The helical transmembrane segment at 952–972 (IITGPIIAVFLLLIVLVYCVV) threads the bilayer. At 973-1362 (QKKKDAEGPA…ILSLPRSSPS (390 aa)) the chain is on the cytoplasmic side. Residue Y993 is modified to Phosphotyrosine; by autocatalysis. Positions 1012–1287 (INLLRELGQG…MLKDDLRPSF (276 aa)) constitute a Protein kinase domain. ATP is bound by residues S1022, K1046, and 1093–1099 (ELMAHGD). D1148 (proton donor/acceptor) is an active-site residue. Residues 1152–1153 (RN) and D1166 each bind ATP. A phosphotyrosine; by autocatalysis mark is found at Y1174, Y1178, Y1179, Y1335, and Y1341.

This sequence belongs to the protein kinase superfamily. Tyr protein kinase family. Insulin receptor subfamily. In terms of assembly, tetramer of 2 alpha and 2 beta chains linked by disulfide bonds. The alpha chains contribute to the formation of the ligand-binding domain, while the beta chains carry the kinase domain. Autophosphorylated on tyrosine residues in response to insulin. Localized mainly to the envelope in oocytes. Localized to the animal hemisphere during early embryonic cleavage. Expressed during organogenesis in regions of ecto- and mesodermic origins. Expressed in the entire encephalon, the otic and optic vesicles, the gills, the somites and the pronephric tubules of the embryo. Also found in adult liver, muscle and regenerated forelimbs.

Its subcellular location is the cell membrane. The enzyme catalyses L-tyrosyl-[protein] + ATP = O-phospho-L-tyrosyl-[protein] + ADP + H(+). Its activity is regulated as follows. Autophosphorylation activates the kinase activity. Its function is as follows. Receptor tyrosine kinase which mediates actions of insulin. May be required for forelimb regeneration. This chain is Insulin receptor (insr), found in Xenopus laevis (African clawed frog).